We begin with the raw amino-acid sequence, 278 residues long: Elongation factor Ts 1, mitochondrial (278 aa).

This sequence belongs to the EF-Ts family.

It is found in the mitochondrion. Associates with the EF-Tu.GDP complex and induces the exchange of GDP to GTP. It remains bound to the aminoacyl-tRNA.EF-Tu.GTP complex up to the GTP hydrolysis stage on the ribosome. This Trypanosoma cruzi (strain CL Brener) protein is Elongation factor Ts 1, mitochondrial.